A 432-amino-acid chain; its full sequence is D-amino acid dehydrogenase (432 aa).

Residue Val3 to Trp17 participates in FAD binding.

Belongs to the DadA oxidoreductase family. FAD is required as a cofactor.

The enzyme catalyses a D-alpha-amino acid + A + H2O = a 2-oxocarboxylate + AH2 + NH4(+). It functions in the pathway amino-acid degradation; D-alanine degradation; NH(3) and pyruvate from D-alanine: step 1/1. Oxidative deamination of D-amino acids. This chain is D-amino acid dehydrogenase, found in Shigella boydii serotype 4 (strain Sb227).